Reading from the N-terminus, the 307-residue chain is Protoheme IX farnesyltransferase (307 aa).

8 helical membrane passes run 32 to 52, 65 to 85, 108 to 128, 131 to 151, 158 to 178, 186 to 206, 251 to 271, and 287 to 307; these read MGIVNSNTLTVFTGFWLALHF, FFTIVGSGLVMAGVCCLNNYI, PGFALTFGLVILLLGFVFLLL, PMAVLMGFIGAFTYVVLYSLW, LNTVVGSISGAVPPLIGWAAI, IAWMLFLIMFIWQIPHFLALA, LGITFMVIATLLNIGWIVLGF, and FVYSLNYLTILFVSMIVVTFF.

Belongs to the UbiA prenyltransferase family. Protoheme IX farnesyltransferase subfamily. Interacts with CtaA.

The protein resides in the cell membrane. It catalyses the reaction heme b + (2E,6E)-farnesyl diphosphate + H2O = Fe(II)-heme o + diphosphate. Its pathway is porphyrin-containing compound metabolism; heme O biosynthesis; heme O from protoheme: step 1/1. Its function is as follows. Converts heme B (protoheme IX) to heme O by substitution of the vinyl group on carbon 2 of heme B porphyrin ring with a hydroxyethyl farnesyl side group. The sequence is that of Protoheme IX farnesyltransferase from Bacillus cereus (strain G9842).